A 214-amino-acid chain; its full sequence is Large ribosomal subunit protein bL25 (214 aa).

It belongs to the bacterial ribosomal protein bL25 family. CTC subfamily. As to quaternary structure, part of the 50S ribosomal subunit; part of the 5S rRNA/L5/L18/L25 subcomplex. Contacts the 5S rRNA. Binds to the 5S rRNA independently of L5 and L18.

Functionally, this is one of the proteins that binds to the 5S RNA in the ribosome where it forms part of the central protuberance. The polypeptide is Large ribosomal subunit protein bL25 (Polynucleobacter necessarius subsp. necessarius (strain STIR1)).